The chain runs to 297 residues: Haloalkane dehalogenase (297 aa).

The AB hydrolase-1 domain occupies 47–148 (PPIVLLHGEP…AIARLVVANG (102 aa)). Asp123 acts as the Nucleophile in catalysis. The active-site Proton donor is the Asp250. Residue His279 is the Proton acceptor of the active site.

This sequence belongs to the haloalkane dehalogenase family. Type 1 subfamily. As to quaternary structure, monomer.

It catalyses the reaction 1-haloalkane + H2O = a halide anion + a primary alcohol + H(+). Its function is as follows. Catalyzes hydrolytic cleavage of carbon-halogen bonds in halogenated aliphatic compounds, leading to the formation of the corresponding primary alcohols, halide ions and protons. This Mycobacterium marinum (strain ATCC BAA-535 / M) protein is Haloalkane dehalogenase.